Consider the following 388-residue polypeptide: S-adenosylmethionine synthase (388 aa).

Position 17 (His17) interacts with ATP. Residue Asp19 coordinates Mg(2+). Glu45 contributes to the K(+) binding site. L-methionine is bound by residues Glu58 and Gln101. The tract at residues 101–111 is flexible loop; the sequence is QSPDIGQGVDT. ATP-binding positions include 160 to 162, 226 to 227, Asp235, 241 to 242, Ala258, and Lys262; these read DGK, RF, and RK. Asp235 serves as a coordination point for L-methionine. Lys266 contributes to the L-methionine binding site.

Belongs to the AdoMet synthase family. As to quaternary structure, homotetramer; dimer of dimers. Mg(2+) is required as a cofactor. It depends on K(+) as a cofactor.

Its subcellular location is the cytoplasm. It catalyses the reaction L-methionine + ATP + H2O = S-adenosyl-L-methionine + phosphate + diphosphate. It participates in amino-acid biosynthesis; S-adenosyl-L-methionine biosynthesis; S-adenosyl-L-methionine from L-methionine: step 1/1. Its function is as follows. Catalyzes the formation of S-adenosylmethionine (AdoMet) from methionine and ATP. The overall synthetic reaction is composed of two sequential steps, AdoMet formation and the subsequent tripolyphosphate hydrolysis which occurs prior to release of AdoMet from the enzyme. The sequence is that of S-adenosylmethionine synthase from Anaeromyxobacter sp. (strain K).